The chain runs to 181 residues: Large ribosomal subunit protein uL6 (181 aa).

Belongs to the universal ribosomal protein uL6 family. In terms of assembly, part of the 50S ribosomal subunit.

This protein binds to the 23S rRNA, and is important in its secondary structure. It is located near the subunit interface in the base of the L7/L12 stalk, and near the tRNA binding site of the peptidyltransferase center. In Flavobacterium psychrophilum (strain ATCC 49511 / DSM 21280 / CIP 103535 / JIP02/86), this protein is Large ribosomal subunit protein uL6.